Here is a 320-residue protein sequence, read N- to C-terminus: Transaldolase (320 aa).

The active-site Schiff-base intermediate with substrate is the K126.

This sequence belongs to the transaldolase family. Type 1 subfamily. As to quaternary structure, homodimer.

It is found in the cytoplasm. The catalysed reaction is D-sedoheptulose 7-phosphate + D-glyceraldehyde 3-phosphate = D-erythrose 4-phosphate + beta-D-fructose 6-phosphate. It functions in the pathway carbohydrate degradation; pentose phosphate pathway; D-glyceraldehyde 3-phosphate and beta-D-fructose 6-phosphate from D-ribose 5-phosphate and D-xylulose 5-phosphate (non-oxidative stage): step 2/3. Transaldolase is important for the balance of metabolites in the pentose-phosphate pathway. The protein is Transaldolase of Bordetella pertussis (strain Tohama I / ATCC BAA-589 / NCTC 13251).